The chain runs to 928 residues: Inner tegument protein (928 aa).

The interval 482 to 928 (WGGAVPANLA…LAGLRKLFVE (447 aa)) is interaction with large tegument protein.

The protein belongs to the herpesviridae inner tegument protein family. Interacts (via C-terminus) with the large tegument protein/LTP (via N-terminus).

It localises to the virion tegument. Its subcellular location is the host cytoplasm. It is found in the host nucleus. The protein resides in the host Golgi apparatus. The protein localises to the host trans-Golgi network. Its function is as follows. Plays an essential role in cytoplasmic secondary envelopment during viral egress. Interacts with the capsid via the large tegument protein/LTP and participates in its transport to the host trans-Golgi network (TGN) where secondary envelopment occurs. Modulates tegumentation and capsid accumulation at the viral assembly complex. This is Inner tegument protein (ORF63) from Homo sapiens (Human).